We begin with the raw amino-acid sequence, 251 residues long: tRNA (guanine-N(1)-)-methyltransferase (251 aa).

Residues Gly113 and 133 to 138 (IGDYVL) contribute to the S-adenosyl-L-methionine site.

Belongs to the RNA methyltransferase TrmD family. In terms of assembly, homodimer.

The protein resides in the cytoplasm. The catalysed reaction is guanosine(37) in tRNA + S-adenosyl-L-methionine = N(1)-methylguanosine(37) in tRNA + S-adenosyl-L-homocysteine + H(+). Its function is as follows. Specifically methylates guanosine-37 in various tRNAs. In Pectobacterium atrosepticum (strain SCRI 1043 / ATCC BAA-672) (Erwinia carotovora subsp. atroseptica), this protein is tRNA (guanine-N(1)-)-methyltransferase.